A 371-amino-acid chain; its full sequence is 4-hydroxy-3-methylbut-2-en-1-yl diphosphate synthase (flavodoxin) (371 aa).

Residues C269, C272, C304, and E311 each contribute to the [4Fe-4S] cluster site.

This sequence belongs to the IspG family. [4Fe-4S] cluster is required as a cofactor.

The catalysed reaction is (2E)-4-hydroxy-3-methylbut-2-enyl diphosphate + oxidized [flavodoxin] + H2O + 2 H(+) = 2-C-methyl-D-erythritol 2,4-cyclic diphosphate + reduced [flavodoxin]. It participates in isoprenoid biosynthesis; isopentenyl diphosphate biosynthesis via DXP pathway; isopentenyl diphosphate from 1-deoxy-D-xylulose 5-phosphate: step 5/6. Its function is as follows. Converts 2C-methyl-D-erythritol 2,4-cyclodiphosphate (ME-2,4cPP) into 1-hydroxy-2-methyl-2-(E)-butenyl 4-diphosphate. The protein is 4-hydroxy-3-methylbut-2-en-1-yl diphosphate synthase (flavodoxin) of Acinetobacter baumannii (strain AB307-0294).